Consider the following 206-residue polypeptide: Large ribosomal subunit protein uL4 (206 aa).

The disordered stretch occupies residues 43–78 (ARSGNRKQKDREEVKHTTKKPWRQKGTGRARAGMSS). Positions 49–58 (KQKDREEVKH) are enriched in basic and acidic residues. Residues 59 to 70 (TTKKPWRQKGTG) show a composition bias toward basic residues.

It belongs to the universal ribosomal protein uL4 family. Part of the 50S ribosomal subunit.

In terms of biological role, one of the primary rRNA binding proteins, this protein initially binds near the 5'-end of the 23S rRNA. It is important during the early stages of 50S assembly. It makes multiple contacts with different domains of the 23S rRNA in the assembled 50S subunit and ribosome. Its function is as follows. Forms part of the polypeptide exit tunnel. The polypeptide is Large ribosomal subunit protein uL4 (Cupriavidus pinatubonensis (strain JMP 134 / LMG 1197) (Cupriavidus necator (strain JMP 134))).